The following is a 128-amino-acid chain: Ribonuclease pancreatic (128 aa).

Residues 1–15 (SESSAKKFERQHMDS) are compositionally biased toward basic and acidic residues. Residues 1–28 (SESSAKKFERQHMDSRGSPSTNPNYCNE) form a disordered region. Residues Lys7 and Arg10 each coordinate substrate. His12 functions as the Proton acceptor in the catalytic mechanism. 4 disulfide bridges follow: Cys26–Cys84, Cys40–Cys95, Cys58–Cys110, and Cys65–Cys72. Asn34 carries N-linked (GlcNAc...) asparagine glycosylation. Substrate is bound by residues 41–45 (KPVNT), Lys66, and Arg85. His119 acts as the Proton donor in catalysis.

Belongs to the pancreatic ribonuclease family. Monomer. Interacts with and forms tight 1:1 complexes with RNH1. Dimerization of two such complexes may occur. Interaction with RNH1 inhibits this protein. Pancreas.

The protein resides in the secreted. The enzyme catalyses an [RNA] containing cytidine + H2O = an [RNA]-3'-cytidine-3'-phosphate + a 5'-hydroxy-ribonucleotide-3'-[RNA].. It carries out the reaction an [RNA] containing uridine + H2O = an [RNA]-3'-uridine-3'-phosphate + a 5'-hydroxy-ribonucleotide-3'-[RNA].. Its function is as follows. Endonuclease that catalyzes the cleavage of RNA on the 3' side of pyrimidine nucleotides. Acts on single-stranded and double-stranded RNA. The protein is Ribonuclease pancreatic (RNASE1) of Myocastor coypus (Coypu).